The sequence spans 171 residues: MFVVKMVLGFLILLSPLCATGLDISQTDIIERSLNFLLFVGILWYFLAKRLRSFLHSKSLEISKRLEEIQAQLKVSKEHKKKLLKELEQAKEKAELIISDANKEAYTITQKYELQTKMDVENLIKNSKALMDLEVKKIKRELVESVFKDLRESKKVSFNAQDCVNILKQRL.

Residues 2–22 form a helical membrane-spanning segment; it reads FVVKMVLGFLILLSPLCATGL.

Belongs to the ATPase B chain family. In terms of assembly, F-type ATPases have 2 components, F(1) - the catalytic core - and F(0) - the membrane proton channel. F(1) has five subunits: alpha(3), beta(3), gamma(1), delta(1), epsilon(1). F(0) has three main subunits: a(1), b(2) and c(10-14). The alpha and beta chains form an alternating ring which encloses part of the gamma chain. F(1) is attached to F(0) by a central stalk formed by the gamma and epsilon chains, while a peripheral stalk is formed by the delta and b chains.

The protein localises to the cell inner membrane. Its function is as follows. F(1)F(0) ATP synthase produces ATP from ADP in the presence of a proton or sodium gradient. F-type ATPases consist of two structural domains, F(1) containing the extramembraneous catalytic core and F(0) containing the membrane proton channel, linked together by a central stalk and a peripheral stalk. During catalysis, ATP synthesis in the catalytic domain of F(1) is coupled via a rotary mechanism of the central stalk subunits to proton translocation. Functionally, component of the F(0) channel, it forms part of the peripheral stalk, linking F(1) to F(0). This is ATP synthase subunit b from Helicobacter pylori (strain J99 / ATCC 700824) (Campylobacter pylori J99).